The primary structure comprises 343 residues: GTPase Obg (343 aa).

The region spanning 2-160 (EKFVDRVKIF…RWIILELKLI (159 aa)) is the Obg domain. Positions 161–332 (ADVGLVGFPN…LKEGLWKKYE (172 aa)) constitute an OBG-type G domain. GTP is bound by residues 167–174 (GFPNAGKS), 192–196 (FTTLS), 214–217 (DIPG), 284–287 (NKID), and 313–315 (SAL). Mg(2+) contacts are provided by S174 and T194.

Belongs to the TRAFAC class OBG-HflX-like GTPase superfamily. OBG GTPase family. As to quaternary structure, monomer. Mg(2+) serves as cofactor.

The protein resides in the cytoplasm. Its function is as follows. An essential GTPase which binds GTP, GDP and possibly (p)ppGpp with moderate affinity, with high nucleotide exchange rates and a fairly low GTP hydrolysis rate. Plays a role in control of the cell cycle, stress response, ribosome biogenesis and in those bacteria that undergo differentiation, in morphogenesis control. The chain is GTPase Obg from Aquifex aeolicus (strain VF5).